Here is a 1870-residue protein sequence, read N- to C-terminus: Non-reducing polyketide synthase pkgA (1870 aa).

The tract at residues 40-279 is N-terminal acylcarrier protein transacylase domain (SAT); the sequence is IQDLIRRLHR…SRHSALPISG (240 aa). The region spanning 416-838 is the Ketosynthase family 3 (KS3) domain; the sequence is DAKLAVVGMA…GGNTTLLLED (423 aa). The disordered stretch occupies residues 453–492; it reads PPDRFDLDAHFDPSGEKENTTTKGSQSNRPLSRQAEQTDP. The segment covering 455-472 has biased composition (basic and acidic residues); sequence DRFDLDAHFDPSGEKENT. Positions 473 to 492 are enriched in polar residues; the sequence is TTKGSQSNRPLSRQAEQTDP. Active-site for beta-ketoacyl synthase activity residues include C577, H712, and H755. Residues 947 to 1282 are malonyl-CoA:ACP transacylase (MAT) domain; it reads AFSGQGCLYH…QSFASLRRGD (336 aa). The segment at 1004 to 1027 is disordered; the sequence is RCPHRESTPSSDASHDSNTNRTST. Polar residues predominate over residues 1011 to 1027; sequence TPSSDASHDSNTNRTST. The segment at 1364-1704 is product template (PT) domain; it reads TSSVQQIIFE…PRALMPVLFP (341 aa). An N-terminal hotdog fold region spans residues 1368-1502; the sequence is QQIIFEEYDE…ATVCYEEAQD (135 aa). One can recognise a PKS/mFAS DH domain in the interval 1368 to 1700; sequence QQIIFEEYDE…FKAVPRALMP (333 aa). The active-site Proton acceptor; for dehydratase activity is the H1400. A C-terminal hotdog fold region spans residues 1538 to 1700; the sequence is KGGPRVNNFF…FKAVPRALMP (163 aa). D1602 acts as the Proton donor; for dehydratase activity in catalysis. The region spanning 1795–1870 is the Carrier domain; sequence QSQNAQATAC…VQDLVTWLSK (76 aa). At S1832 the chain carries O-(pantetheine 4'-phosphoryl)serine.

Pantetheine 4'-phosphate serves as cofactor.

It catalyses the reaction holo-[ACP] + 6 malonyl-CoA + acetyl-CoA + 6 H(+) = 3,5,7,9,11,13-hexaoxotetradecanoyl-[ACP] + 6 CO2 + 7 CoA. The enzyme catalyses holo-[ACP] + 5 malonyl-CoA + acetyl-CoA + 5 H(+) = 3,5,7,9,11-pentaoxododecanoyl-[ACP] + 5 CO2 + 6 CoA. Its pathway is secondary metabolite biosynthesis. In terms of biological role, non-reducing polyketide synthase; part of the pkg gene cluster that mediates the biosynthesis of dihydrocitreoisocoumarin and 6,8-dihydroxy-3-(2-oxopropyl)-isocoumarin. The non-reducing polyketide synthase pkgA performs the condensation of one acetyl-CoA starter unit with 6 and 5 malonyl-CoA units, respectively. As pkgA lacks a releasing domain, the thioesterase pkgB is necessary to break the thioester bond and release dihydrocitreoisocoumarin and 6,8-dihydroxy-3-(2-oxopropyl)-isocoumarin from pkgA. This chain is Non-reducing polyketide synthase pkgA, found in Emericella nidulans (strain FGSC A4 / ATCC 38163 / CBS 112.46 / NRRL 194 / M139) (Aspergillus nidulans).